Reading from the N-terminus, the 445-residue chain is Arginine/agmatine antiporter (445 aa).

At 1–9 (MSSDADAHK) the chain is on the cytoplasmic side. The chain crosses the membrane as a helical span at residues 10-30 (VGLIPVTLMVSGNIMGSGVFL). I23 provides a ligand contact to agmatine. Residues I23 and S26 each coordinate L-arginine. At 31–38 (LPANLAAT) the chain is on the periplasmic side. A helical transmembrane segment spans residues 39-59 (GGIAIYGWLVTIIGALALSMV). At 60–98 (YAKMSSLDPSPGGSYAYARRCFGPFLGYQTNVLYWLACW) the chain is on the cytoplasmic side. Positions 96, 97, and 101 each coordinate agmatine. An L-arginine-binding site is contributed by A96. Residues 99–119 (IGNIAMVVIGVGYLSYFFPIL) traverse the membrane as a helical segment. The Periplasmic segment spans residues 120–122 (KDP). The helical transmembrane segment at 123 to 143 (LVLTLTCVAVLWIFVLLNIVG) threads the bilayer. Residues 144–152 (PKMITRVQA) are Cytoplasmic-facing. The helical transmembrane segment at 153-173 (VATVLALVPIVGIAVFGWFWF) threads the bilayer. The Periplasmic portion of the chain corresponds to 174–196 (KGETYMAAWNVSGMNTFGAIQST). A helical membrane pass occupies residues 197–217 (LNVTLWSFIGVESASVAAGVV). The L-arginine site is built by W202 and I205. I205 contributes to the agmatine binding site. The Cytoplasmic segment spans residues 218 to 225 (KNPKRNVP). The chain crosses the membrane as a helical span at residues 226-246 (IATIGGVLIAAVCYVLSTTAI). Residues 247 to 275 (MGMIPNAALRVSASPFGDAARMALGDTAG) are Periplasmic-facing. Residues 276-296 (AIVSFCAAAGCLGSLGGWTLL) form a helical membrane-spanning segment. Agmatine is bound at residue W293. Residues 297–319 (AGQTAKAAADDGLFPPIFARVNK) are Cytoplasmic-facing. Residues 320–340 (AGTPVAGLLIVGVLMTIFQFS) form a helical membrane-spanning segment. The Periplasmic portion of the chain corresponds to 341–355 (SMSPNAAKEFGLVSS). Residues 356–376 (VSVIFTLVPYLYTCAALLLLG) traverse the membrane as a helical segment. S357 is an L-arginine binding site. The Cytoplasmic portion of the chain corresponds to 377–385 (HGHFGKARP). The chain crosses the membrane as a helical span at residues 386–406 (LYLLITFVAFVYCIWAVIGSG). Over 407–408 (AK) the chain is Periplasmic. The chain crosses the membrane as a helical span at residues 409 to 429 (EVMWSFVTLMVITALYALNYN). Residues 430–445 (RIHKNPYPLDAPVKQD) are Cytoplasmic-facing.

It belongs to the amino acid-polyamine-organocation (APC) superfamily. Basic amino acid/polyamine antiporter (APA) (TC 2.A.3.2) family. In terms of assembly, homodimer; each subunit has its own individual transport capacity.

The protein resides in the cell inner membrane. The enzyme catalyses agmatine(in) + L-arginine(out) = agmatine(out) + L-arginine(in). Its function is as follows. Major component of the acid-resistance (AR) system allowing enteric pathogens to survive the acidic environment in the stomach. Exchanges extracellular arginine for its intracellular decarboxylation product agmatine (Agm) thereby expelling intracellular protons. Probably undergoes several conformational states in order to translocate the substrate across the membrane; keeps the substrate accessible to only 1 side of the membrane at a time by opening and closing 3 membrane-internal gates. This Salmonella typhi protein is Arginine/agmatine antiporter (adiC).